Here is a 376-residue protein sequence, read N- to C-terminus: Carbamoyl phosphate synthase small chain (376 aa).

Residues 1 to 183 (MSKAVLVLED…PDGPPGVSRF (183 aa)) are CPSase. The L-glutamine site is built by Ser46, Gly232, and Gly234. Residues 184 to 376 (TVAALDLGIK…FVELMAGEGR (193 aa)) form the Glutamine amidotransferase type-1 domain. Cys260 acts as the Nucleophile in catalysis. L-glutamine-binding residues include Phe261, Gln264, Asn302, Gly304, and Phe305. Residues His350 and Glu352 contribute to the active site.

It belongs to the CarA family. As to quaternary structure, composed of two chains; the small (or glutamine) chain promotes the hydrolysis of glutamine to ammonia, which is used by the large (or ammonia) chain to synthesize carbamoyl phosphate. Tetramer of heterodimers (alpha,beta)4.

It catalyses the reaction hydrogencarbonate + L-glutamine + 2 ATP + H2O = carbamoyl phosphate + L-glutamate + 2 ADP + phosphate + 2 H(+). The enzyme catalyses L-glutamine + H2O = L-glutamate + NH4(+). Its pathway is amino-acid biosynthesis; L-arginine biosynthesis; carbamoyl phosphate from bicarbonate: step 1/1. It functions in the pathway pyrimidine metabolism; UMP biosynthesis via de novo pathway; (S)-dihydroorotate from bicarbonate: step 1/3. In terms of biological role, small subunit of the glutamine-dependent carbamoyl phosphate synthetase (CPSase). CPSase catalyzes the formation of carbamoyl phosphate from the ammonia moiety of glutamine, carbonate, and phosphate donated by ATP, constituting the first step of 2 biosynthetic pathways, one leading to arginine and/or urea and the other to pyrimidine nucleotides. The small subunit (glutamine amidotransferase) binds and cleaves glutamine to supply the large subunit with the substrate ammonia. In Mycobacterium bovis (strain ATCC BAA-935 / AF2122/97), this protein is Carbamoyl phosphate synthase small chain.